A 237-amino-acid chain; its full sequence is uncharacterized protein (237 aa).

In terms of domain architecture, Response regulatory spans 3 to 116; it reads SALLIDDERF…RLAKTVQRLL (114 aa). D54 carries the post-translational modification 4-aspartylphosphate. One can recognise an HTH LytTR-type domain in the interval 135–236; that stretch reads IPCTGLNRIV…LKELKEMLGF (102 aa).

This is an uncharacterized protein from Vibrio cholerae serotype O1 (strain ATCC 39315 / El Tor Inaba N16961).